The sequence spans 332 residues: MSDFAFFALETLIKCIIIIAIFASLAGLATYAERKVLAYFQRRIGPDMVGPFGLIQLVADMIKLFTKEDIIPSNSQKFIFAIAPLISAICAFVSLAAIPMLPEFTLFGRVIQPIVADINVALLFVIGTSGLCFYAVFLGGLASNNKWSILGAARGLVSIISYESVGALALIAIIMLVGSFSLVDINNYQSDGFFSWLIFKQPLAFVLFIIALFIETNRTPLCLTENDAEIVAGYGTEYSGLRWGIFFIGEYTSMIAGAILVTLLFLGGFNSFWIIPGWIMMIVKSSFIFFWYFWARAAFPQLRPDQVMKMCYLILIPLAVLNLLITALTVLL.

The next 9 membrane-spanning stretches (helical) occupy residues 4 to 24, 44 to 64, 78 to 98, 120 to 140, 165 to 185, 194 to 214, 255 to 275, 279 to 299, and 312 to 332; these read FAFFALETLIKCIIIIAIFAS, IGPDMVGPFGLIQLVADMIKL, FIFAIAPLISAICAFVSLAAI, VALLFVIGTSGLCFYAVFLGG, VGALALIAIIMLVGSFSLVDI, FSWLIFKQPLAFVLFIIALFI, IAGAILVTLLFLGGFNSFWII, IMMIVKSSFIFFWYFWARAAF, and YLILIPLAVLNLLITALTVLL.

It belongs to the complex I subunit 1 family. In terms of assembly, NDH-1 is composed of 14 different subunits. Subunits NuoA, H, J, K, L, M, N constitute the membrane sector of the complex.

The protein localises to the cell inner membrane. It carries out the reaction a quinone + NADH + 5 H(+)(in) = a quinol + NAD(+) + 4 H(+)(out). Its function is as follows. NDH-1 shuttles electrons from NADH, via FMN and iron-sulfur (Fe-S) centers, to quinones in the respiratory chain. The immediate electron acceptor for the enzyme in this species is believed to be ubiquinone. Couples the redox reaction to proton translocation (for every two electrons transferred, four hydrogen ions are translocated across the cytoplasmic membrane), and thus conserves the redox energy in a proton gradient. This subunit may bind ubiquinone. The sequence is that of NADH-quinone oxidoreductase subunit H from Campylobacter jejuni subsp. jejuni serotype O:23/36 (strain 81-176).